The chain runs to 409 residues: Glycosaminoglycan xylosylkinase (409 aa).

Topologically, residues 1-6 (MKLKQR) are cytoplasmic. Residues 7–25 (VVLLAILLVIFIFTKVFLI) form a helical; Signal-anchor for type II membrane protein membrane-spanning segment. The Lumenal portion of the chain corresponds to 26-409 (DNLDTSAANR…VEDRMPLSHL (384 aa)). Positions 107 and 123 each coordinate ATP. Residue D142 participates in Mn(2+) binding. An N-linked (GlcNAc...) asparagine glycan is attached at N193. 2 cysteine pairs are disulfide-bonded: C196–C211 and C201–C204. 222 to 225 (TLWL) contributes to the ATP binding site. Cystine bridges form between C257-C331 and C332-C389. Residue D289 is part of the active site. Positions 294 and 309 each coordinate ATP. Position 309 (D309) interacts with Mn(2+).

This sequence belongs to the FAM20 family. The cofactor is Mn(2+). As to expression, widely expressed. Strongly expressed in pancreas, spleen and fetal liver.

It is found in the golgi apparatus membrane. It catalyses the reaction 3-O-(beta-D-galactosyl-(1-&gt;3)-beta-D-galactosyl-(1-&gt;4)-beta-D-xylosyl)-L-seryl-[protein] + ATP = 3-O-(beta-D-galactosyl-(1-&gt;3)-beta-D-galactosyl-(1-&gt;4)-beta-D-2-O-phosphoxylosyl)-L-seryl-[protein] + ADP + H(+). Functionally, responsible for the 2-O-phosphorylation of xylose in the glycosaminoglycan-protein linkage region of proteoglycans thereby regulating the amount of mature GAG chains. Sulfated glycosaminoglycans (GAGs), including heparan sulfate and chondroitin sulfate, are synthesized on the so-called common GAG-protein linkage region (GlcUAbeta1-3Galbeta1-3Galbeta1-4Xylbeta1-O-Ser) of core proteins, which is formed by the stepwise addition of monosaccharide residues by the respective specific glycosyltransferases. Xylose 2-O-phosphorylation may influence the catalytic activity of B3GAT3 (GlcAT-I) which completes the precursor tetrasaccharide of GAG-protein linkage regions on which the repeating disaccharide region is synthesized. The polypeptide is Glycosaminoglycan xylosylkinase (Homo sapiens (Human)).